Reading from the N-terminus, the 765-residue chain is Zinc metalloproteinase nas-37 (765 aa).

Residues 1-22 form the signal peptide; it reads MKSQACLKVCLALIGLVSIVST. Residues 23–114 constitute a propeptide that is removed on maturation; it reads AYIANDVVSD…SESNSPRSRR (92 aa). One can recognise a Peptidase M12A domain in the interval 115–308; the sequence is QAHPDPRNFW…AKMINTRYCS (194 aa). Asn-126 carries an N-linked (GlcNAc...) asparagine glycan. Disulfide bonds link Cys-156–Cys-307, Cys-177–Cys-196, Cys-311–Cys-331, Cys-333–Cys-342, Cys-350–Cys-374, and Cys-400–Cys-420. His-204 contributes to the Zn(2+) binding site. Glu-205 is an active-site residue. His-208 and His-214 together coordinate Zn(2+). Residues 303–343 form the EGF-like domain; that stretch reads NTRYCSNVCQRSLPCLNEGYTDPNNCGRCRCPSGYGGTYCE. The CUB domain maps to 350-458; it reads CGGSLTASSS…RGFTLKYRAI (109 aa). The tract at residues 513–573 is disordered; it reads KYSSEELYDP…TRPTPTTTVA (61 aa). Composition is skewed to low complexity over residues 526-545 and 562-573; these read LSPSSSSASPALLLPSDASP and ALTRPTPTTTVA. In terms of domain architecture, TSP type-1 spans 576–627; it reads TASWSAWGEWSACSQPCGGCGTKTRVRACYGGNQVCPGSNLDRESCNAHACA. 3 cysteine pairs are disulfide-bonded: Cys-588/Cys-621, Cys-592/Cys-626, and Cys-604/Cys-611.

Requires Zn(2+) as cofactor. Expressed in hypodermal cells. Not expressed in the seam cells in L1 to L3 larvae, but it is present in seam cells of L4 larvae. Also expressed in attachment points of the cuticle at the anterior end of larvae, in the arcade cells in the mouth, the anterior pharynx, the amphid socket cells, and in the rectal epithelial cells at the posterior end of the larvae (at protein level).

Its subcellular location is the secreted. In terms of biological role, metalloprotease. Plays an essential role in molting, a process during larval stages in which a new cuticle is formed and the old cuticle is shed. Required during ecdysis, the opening of the cuticle to allow the worm to escape. The protein is Zinc metalloproteinase nas-37 (nas-37) of Caenorhabditis elegans.